Here is a 453-residue protein sequence, read N- to C-terminus: Ribulose bisphosphate carboxylase large chain (453 aa).

Residues 1 to 2 (MS) constitute a propeptide that is removed on maturation. Pro3 is subject to N-acetylproline. An N6,N6,N6-trimethyllysine modification is found at Lys14. The substrate site is built by Asn123 and Thr173. Residue Lys175 is the Proton acceptor of the active site. Lys177 contributes to the substrate binding site. Residues Lys201, Asp203, and Glu204 each contribute to the Mg(2+) site. N6-carboxylysine is present on Lys201. His294 acts as the Proton acceptor in catalysis. Residues Arg295, His327, and Ser379 each contribute to the substrate site.

The protein belongs to the RuBisCO large chain family. Type I subfamily. As to quaternary structure, heterohexadecamer of 8 large chains and 8 small chains; disulfide-linked. The disulfide link is formed within the large subunit homodimers. Requires Mg(2+) as cofactor. The disulfide bond which can form in the large chain dimeric partners within the hexadecamer appears to be associated with oxidative stress and protein turnover.

It localises to the plastid. The protein localises to the chloroplast. The enzyme catalyses 2 (2R)-3-phosphoglycerate + 2 H(+) = D-ribulose 1,5-bisphosphate + CO2 + H2O. It carries out the reaction D-ribulose 1,5-bisphosphate + O2 = 2-phosphoglycolate + (2R)-3-phosphoglycerate + 2 H(+). In terms of biological role, ruBisCO catalyzes two reactions: the carboxylation of D-ribulose 1,5-bisphosphate, the primary event in carbon dioxide fixation, as well as the oxidative fragmentation of the pentose substrate in the photorespiration process. Both reactions occur simultaneously and in competition at the same active site. The sequence is that of Ribulose bisphosphate carboxylase large chain from Asperula laevigata (Smooth woodruff).